The primary structure comprises 140 residues: MAREFSRTRRIAQQLQQELAQVLQRDIKDPRIGMVTVNDVEVSRDLSYAKVFVTFFEEDSKLVEEKLEALTTASGYVRSLVAGRMKLRVMPELRFVYDASLVEGMRMSNLVTRIIHDDEAKQQKHNGKDKTDTADSEGEE.

Residues 118–133 (DEAKQQKHNGKDKTDT) show a composition bias toward basic and acidic residues. Residues 118–140 (DEAKQQKHNGKDKTDTADSEGEE) form a disordered region.

The protein belongs to the RbfA family. In terms of assembly, monomer. Binds 30S ribosomal subunits, but not 50S ribosomal subunits or 70S ribosomes.

It localises to the cytoplasm. Its function is as follows. One of several proteins that assist in the late maturation steps of the functional core of the 30S ribosomal subunit. Associates with free 30S ribosomal subunits (but not with 30S subunits that are part of 70S ribosomes or polysomes). Required for efficient processing of 16S rRNA. May interact with the 5'-terminal helix region of 16S rRNA. The sequence is that of Ribosome-binding factor A from Shewanella woodyi (strain ATCC 51908 / MS32).